The primary structure comprises 355 residues: Phosphoserine aminotransferase (355 aa).

L-glutamate is bound at residue R41. Residues 75–76, W99, T147, D166, and Q189 each bind pyridoxal 5'-phosphate; that span reads AS. K190 carries the N6-(pyridoxal phosphate)lysine modification. Position 231 to 232 (231 to 232) interacts with pyridoxal 5'-phosphate; that stretch reads NT.

This sequence belongs to the class-V pyridoxal-phosphate-dependent aminotransferase family. SerC subfamily. Homodimer. Pyridoxal 5'-phosphate is required as a cofactor.

It is found in the cytoplasm. It carries out the reaction O-phospho-L-serine + 2-oxoglutarate = 3-phosphooxypyruvate + L-glutamate. The catalysed reaction is 4-(phosphooxy)-L-threonine + 2-oxoglutarate = (R)-3-hydroxy-2-oxo-4-phosphooxybutanoate + L-glutamate. It participates in amino-acid biosynthesis; L-serine biosynthesis; L-serine from 3-phospho-D-glycerate: step 2/3. It functions in the pathway cofactor biosynthesis; pyridoxine 5'-phosphate biosynthesis; pyridoxine 5'-phosphate from D-erythrose 4-phosphate: step 3/5. Its function is as follows. Catalyzes the reversible conversion of 3-phosphohydroxypyruvate to phosphoserine and of 3-hydroxy-2-oxo-4-phosphonooxybutanoate to phosphohydroxythreonine. In Parabacteroides distasonis (strain ATCC 8503 / DSM 20701 / CIP 104284 / JCM 5825 / NCTC 11152), this protein is Phosphoserine aminotransferase.